The sequence spans 241 residues: UDP-2,3-diacylglucosamine hydrolase (241 aa).

Mn(2+)-binding residues include Asp8, His10, Asp41, Asn79, and His114. Position 79-80 (Asn79–Arg80) interacts with substrate. Asp122, Ser160, Lys167, and His195 together coordinate substrate. 2 residues coordinate Mn(2+): His195 and His197.

This sequence belongs to the LpxH family. Mn(2+) serves as cofactor.

Its subcellular location is the cell inner membrane. It catalyses the reaction UDP-2-N,3-O-bis[(3R)-3-hydroxytetradecanoyl]-alpha-D-glucosamine + H2O = 2-N,3-O-bis[(3R)-3-hydroxytetradecanoyl]-alpha-D-glucosaminyl 1-phosphate + UMP + 2 H(+). Its pathway is glycolipid biosynthesis; lipid IV(A) biosynthesis; lipid IV(A) from (3R)-3-hydroxytetradecanoyl-[acyl-carrier-protein] and UDP-N-acetyl-alpha-D-glucosamine: step 4/6. Its function is as follows. Hydrolyzes the pyrophosphate bond of UDP-2,3-diacylglucosamine to yield 2,3-diacylglucosamine 1-phosphate (lipid X) and UMP by catalyzing the attack of water at the alpha-P atom. Involved in the biosynthesis of lipid A, a phosphorylated glycolipid that anchors the lipopolysaccharide to the outer membrane of the cell. The sequence is that of UDP-2,3-diacylglucosamine hydrolase from Azotobacter vinelandii (strain DJ / ATCC BAA-1303).